We begin with the raw amino-acid sequence, 118 residues long: uncharacterized protein (118 aa).

4 consecutive transmembrane segments (helical) span residues isoleucine 5–methionine 20, valine 25–phenylalanine 42, alanine 53–leucine 73, and leucine 83–isoleucine 103.

It localises to the cell membrane. This is an uncharacterized protein from Bacillus subtilis (strain 168).